The following is a 258-amino-acid chain: Flagellar L-ring protein (258 aa).

The signal sequence occupies residues 1–15 (MKRIVCLALFLSMTG). A lipid anchor (N-palmitoyl cysteine) is attached at Cys16. The S-diacylglycerol cysteine moiety is linked to residue Cys16.

This sequence belongs to the FlgH family. The basal body constitutes a major portion of the flagellar organelle and consists of four rings (L,P,S, and M) mounted on a central rod.

It localises to the cell outer membrane. Its subcellular location is the bacterial flagellum basal body. Its function is as follows. Assembles around the rod to form the L-ring and probably protects the motor/basal body from shearing forces during rotation. The polypeptide is Flagellar L-ring protein (Vibrio atlanticus (strain LGP32) (Vibrio splendidus (strain Mel32))).